The primary structure comprises 318 residues: MPEYLLLPAGLISLSLAIAAGLYLLTARGYQSSDSVANAYDQWTEDGILEYYWGDHIHLGHYGDPPVAKDFIQSKIDFVHAMAQWGGLDTLPPGTTVLDVGCGIGGSSRILAKDYGFNVTGITISPQQVKRATELTPPDVTAKFAVDDAMALSFPDGSFDVVWSVEAGPHMPDKAVFAKELLRVVKPGGILVVADWNQRDDRQVPLNFWEKPVMRQLLDQWSHPAFASIEGFAENLEATGLVEGQVTTADWTVPTLPAWLDTIWQGIIRPQGWLQYGIRGFIKSVREVPTILLMRLAFGVGLCRFGMFKAVRKNATQA.

A signal peptide spans Met-1 to Ala-39. Residues Val-97–Gly-106 form an SAM motif I region. Positions Gly-157–Val-165 are SAM motif II. The interval Val-184 to Val-193 is SAM motif III.

The protein belongs to the class I-like SAM-binding methyltransferase superfamily. gTMT family.

It carries out the reaction 2-methyl-6-phytyl-1,4-benzene-1,4-diol + S-adenosyl-L-methionine = 2,3-dimethyl-6-phytylbenzene-1,4-diol + S-adenosyl-L-homocysteine + H(+). It catalyses the reaction 2-methyl-6-(all-trans-nonaprenyl)benzene-1,4-diol + S-adenosyl-L-methionine = plastoquinol-9 + S-adenosyl-L-homocysteine + H(+). The catalysed reaction is 6-geranylgeranyl-2-methylbenzene-1,4-diol + S-adenosyl-L-methionine = 6-geranylgeranyl-2,3-dimethylbenzene-1,4-diol + S-adenosyl-L-homocysteine + H(+). It participates in cofactor biosynthesis; tocopherol biosynthesis. Functionally, involved in a key methylation step in both tocopherol (vitamin E) and plastoquinone synthesis. Catalyzes the conversion of 2-methyl-6-phytyl-1,4-hydroquinol (MPBQ) to 2,3-dimethyl-6-phytyl-1,4-hydroquinol (DMPQ, a substrate for tocopherol cyclase), and 2-methyl-6-solanyl-1,4-benzoquinol (MSBQ) to plastoquinol. The chain is 2-methyl-6-phytyl-1,4-hydroquinone methyltransferase from Synechocystis sp. (strain ATCC 27184 / PCC 6803 / Kazusa).